A 417-amino-acid chain; its full sequence is MGQSSSKPDAKAHNMASSLTEFFKNFKMESKIISKETIDSIQSCIQEGDIQKVISIINAALTDIEKAPLNIAVTGETGAGKSTFINALRGIGHEESESAESGAVETTKDRKKYTHPKFPNVTIWDLPGVGTTNFKPEEYLKKMKFQEYDFFLIISSARFRDNEAQLAEAIKKMKKKFYFVRTKIDSDLWNEKKAKPSSYNREKILEVIRSDCVKNLQNANAASTRVFLVSSFEVAQFDFPSLESTLLEELPAHKRHIFVQCLPTITEPAIDRRRDVLKQTIWLEALKAGASATIPMMSFFNDDIEEFEKILSHYRACFGLDDESLENMAKEWSMSVEELESTIKSPHLLSSEPNESVADKLVKTMEKIFAVTGGFVATGLYFRKSYYMQNYFLDTVTEDAKVLLKKKVFLQDSVDSE.

Gly2 carries the N-myristoyl glycine lipid modification. Positions 67–249 constitute an IRG-type G domain; the sequence is APLNIAVTGE…PSLESTLLEE (183 aa). Positions 78, 79, 82, 83, 101, 183, 185, and 231 each coordinate GDP. Helical transmembrane passes span 284–302 and 370–387; these read EALK…FFND and AVTG…KSYY.

This sequence belongs to the TRAFAC class dynamin-like GTPase superfamily. GB1/RHD3 GTPase family. GB1 subfamily. Homooligomer; homooligomerization occurs upon GTP-binding and is required for the association with membranous structures. Homodimer; GDP-binding induces formation of an inactive head-to-head homodimer. Post-translationally, myristoylation is required for localization to pathogen-containing vacuoles. In terms of processing, (Microbial infection) Phosphorylated by Toxoplasma gondii ROP18.

The protein resides in the membrane. It is found in the cytoplasmic vesicle membrane. It catalyses the reaction GTP + H2O = GDP + phosphate + H(+). In terms of biological role, interferon (IFN)-inducible GTPase that plays important roles in innate immunity against a diverse range of bacterial, viral and protozoan pathogens by mediating cytosolic release of pathogenic ligands that activate the inflammasomes. Following infection, recruited to the membrane of pathogens in a GBP-dependent manner and mediates disruption of the pathogen membrane, liberating ligands that are detected by inflammasomes, such as lipopolysaccharide (LPS) that activates the non-canonical CASP4/CASP11 inflammasome or double-stranded DNA (dsDNA) that activates the AIM2 inflammasome. Promotes AIM2 and NLRP3 inflammasome activation following A.fumigatus infection by liberating beta-glucan, which directly triggers inflammasome assembly. Promotes NLRP3 inflammasome activation following influenza A virus infection. In Mus musculus (Mouse), this protein is Interferon-gamma-inducible GTPase 10.